Consider the following 335-residue polypeptide: Biotin synthase (335 aa).

Positions 1-20 (MVSVGTQSHSGRDQAEQNPS) are disordered. A Radical SAM core domain is found at 59-284 (GHLQKSSLLS…MMPQSMVRLS (226 aa)). [4Fe-4S] cluster is bound by residues cysteine 74, cysteine 78, and cysteine 81. [2Fe-2S] cluster-binding residues include cysteine 118, cysteine 150, cysteine 210, and arginine 282.

Belongs to the radical SAM superfamily. Biotin synthase family. Homodimer. [4Fe-4S] cluster is required as a cofactor. Requires [2Fe-2S] cluster as cofactor.

The catalysed reaction is (4R,5S)-dethiobiotin + (sulfur carrier)-SH + 2 reduced [2Fe-2S]-[ferredoxin] + 2 S-adenosyl-L-methionine = (sulfur carrier)-H + biotin + 2 5'-deoxyadenosine + 2 L-methionine + 2 oxidized [2Fe-2S]-[ferredoxin]. Its pathway is cofactor biosynthesis; biotin biosynthesis; biotin from 7,8-diaminononanoate: step 2/2. Catalyzes the conversion of dethiobiotin (DTB) to biotin by the insertion of a sulfur atom into dethiobiotin via a radical-based mechanism. This is Biotin synthase from Zymomonas mobilis subsp. mobilis (strain ATCC 31821 / ZM4 / CP4).